A 347-amino-acid polypeptide reads, in one-letter code: Quinolinate synthase (347 aa).

2 residues coordinate iminosuccinate: H47 and S68. C113 is a binding site for [4Fe-4S] cluster. Residues 139–141 and S156 each bind iminosuccinate; that span reads YAN. C200 is a binding site for [4Fe-4S] cluster. Residues 226 to 228 and T243 contribute to the iminosuccinate site; that span reads HPE. C297 contacts [4Fe-4S] cluster.

It belongs to the quinolinate synthase family. Type 1 subfamily. [4Fe-4S] cluster is required as a cofactor.

It is found in the cytoplasm. It carries out the reaction iminosuccinate + dihydroxyacetone phosphate = quinolinate + phosphate + 2 H2O + H(+). The protein operates within cofactor biosynthesis; NAD(+) biosynthesis; quinolinate from iminoaspartate: step 1/1. Catalyzes the condensation of iminoaspartate with dihydroxyacetone phosphate to form quinolinate. The chain is Quinolinate synthase from Escherichia coli (strain K12 / MC4100 / BW2952).